The primary structure comprises 339 residues: Ketol-acid reductoisomerase (NADP(+)) (339 aa).

The 182-residue stretch at 1–182 (MRVYYDRDAD…GGGRAGIIET (182 aa)) folds into the KARI N-terminal Rossmann domain. NADP(+)-binding positions include 24–27 (YGSQ), R48, S51, T53, and 83–86 (DELQ). The active site involves H108. Residue G134 coordinates NADP(+). Positions 183–328 (SFKEECETDL…AKLRDMMPWI (146 aa)) constitute a KARI C-terminal knotted domain. Positions 191, 195, 227, and 231 each coordinate Mg(2+). S252 lines the substrate pocket.

It belongs to the ketol-acid reductoisomerase family. The cofactor is Mg(2+).

The enzyme catalyses (2R)-2,3-dihydroxy-3-methylbutanoate + NADP(+) = (2S)-2-acetolactate + NADPH + H(+). It carries out the reaction (2R,3R)-2,3-dihydroxy-3-methylpentanoate + NADP(+) = (S)-2-ethyl-2-hydroxy-3-oxobutanoate + NADPH + H(+). The protein operates within amino-acid biosynthesis; L-isoleucine biosynthesis; L-isoleucine from 2-oxobutanoate: step 2/4. Its pathway is amino-acid biosynthesis; L-valine biosynthesis; L-valine from pyruvate: step 2/4. Its function is as follows. Involved in the biosynthesis of branched-chain amino acids (BCAA). Catalyzes an alkyl-migration followed by a ketol-acid reduction of (S)-2-acetolactate (S2AL) to yield (R)-2,3-dihydroxy-isovalerate. In the isomerase reaction, S2AL is rearranged via a Mg-dependent methyl migration to produce 3-hydroxy-3-methyl-2-ketobutyrate (HMKB). In the reductase reaction, this 2-ketoacid undergoes a metal-dependent reduction by NADPH to yield (R)-2,3-dihydroxy-isovalerate. The polypeptide is Ketol-acid reductoisomerase (NADP(+)) (Rhodopseudomonas palustris (strain HaA2)).